Reading from the N-terminus, the 298-residue chain is Protease HtpX homolog (298 aa).

The next 2 helical transmembrane spans lie at 14-34 (VVLL…AGYL) and 39-59 (YAMG…SMIF). Zn(2+) is bound at residue His143. Residue Glu144 is part of the active site. Residue His147 participates in Zn(2+) binding. 2 helical membrane passes run 158–178 (IAVA…RMLW) and 197–217 (IITL…ASLI). Glu226 contributes to the Zn(2+) binding site.

This sequence belongs to the peptidase M48B family. Requires Zn(2+) as cofactor.

Its subcellular location is the cell membrane. This is Protease HtpX homolog from Streptococcus pyogenes serotype M3 (strain SSI-1).